The following is a 201-amino-acid chain: FMN-dependent NADH:quinone oxidoreductase (201 aa).

FMN-binding positions include Ser10, 16 to 18 (SQS), 96 to 99 (MYNF), and 140 to 143 (SRGG).

This sequence belongs to the azoreductase type 1 family. In terms of assembly, homodimer. FMN serves as cofactor.

The catalysed reaction is 2 a quinone + NADH + H(+) = 2 a 1,4-benzosemiquinone + NAD(+). It catalyses the reaction N,N-dimethyl-1,4-phenylenediamine + anthranilate + 2 NAD(+) = 2-(4-dimethylaminophenyl)diazenylbenzoate + 2 NADH + 2 H(+). In terms of biological role, quinone reductase that provides resistance to thiol-specific stress caused by electrophilic quinones. Its function is as follows. Also exhibits azoreductase activity. Catalyzes the reductive cleavage of the azo bond in aromatic azo compounds to the corresponding amines. The polypeptide is FMN-dependent NADH:quinone oxidoreductase (Shigella flexneri serotype 5b (strain 8401)).